A 450-amino-acid polypeptide reads, in one-letter code: tRNA (guanine-N(7)-)-methyltransferase non-catalytic subunit TRM82 (450 aa).

A compositionally biased stretch (basic and acidic residues) spans 69-82; sequence AAKKLKTNEGEAIE. The interval 69 to 103 is disordered; that stretch reads AAKKLKTNEGEAIERPGNQRRVPLPGKDPKVPVPG. 3 WD repeats span residues 108-147, 200-241, and 245-285; these read PVYQ…KDNC, GHVS…VIDK, and GHKE…LMSS.

It belongs to the WD repeat TRM82 family. Forms a heterodimer with the catalytic subunit TRM8.

The protein resides in the nucleus. The protein operates within tRNA modification; N(7)-methylguanine-tRNA biosynthesis. Its function is as follows. Required for the formation of N(7)-methylguanine at position 46 (m7G46) in tRNA. In the complex, it is required to stabilize and induce conformational changes of the catalytic subunit. The polypeptide is tRNA (guanine-N(7)-)-methyltransferase non-catalytic subunit TRM82 (Eremothecium gossypii (strain ATCC 10895 / CBS 109.51 / FGSC 9923 / NRRL Y-1056) (Yeast)).